We begin with the raw amino-acid sequence, 130 residues long: Small ribosomal subunit protein uS8 (130 aa).

Belongs to the universal ribosomal protein uS8 family. Part of the 30S ribosomal subunit. Contacts proteins S5 and S12.

In terms of biological role, one of the primary rRNA binding proteins, it binds directly to 16S rRNA central domain where it helps coordinate assembly of the platform of the 30S subunit. The chain is Small ribosomal subunit protein uS8 from Glaesserella parasuis serovar 5 (strain SH0165) (Haemophilus parasuis).